We begin with the raw amino-acid sequence, 104 residues long: Large ribosomal subunit protein uL24 (104 aa).

Belongs to the universal ribosomal protein uL24 family. As to quaternary structure, part of the 50S ribosomal subunit.

Functionally, one of two assembly initiator proteins, it binds directly to the 5'-end of the 23S rRNA, where it nucleates assembly of the 50S subunit. Its function is as follows. One of the proteins that surrounds the polypeptide exit tunnel on the outside of the subunit. The protein is Large ribosomal subunit protein uL24 of Clostridium perfringens (strain SM101 / Type A).